The following is a 239-amino-acid chain: Large ribosomal subunit protein uL2 (239 aa).

Disordered regions lie at residues 1–28 (MGKR…VGPA) and 199–239 (SHPH…RRKG). The segment covering 225–239 (KVGHIAARRTGRRKG) has biased composition (basic residues).

The protein belongs to the universal ribosomal protein uL2 family. Part of the 50S ribosomal subunit. Forms a bridge to the 30S subunit in the 70S ribosome.

In terms of biological role, one of the primary rRNA binding proteins. Required for association of the 30S and 50S subunits to form the 70S ribosome, for tRNA binding and peptide bond formation. It has been suggested to have peptidyltransferase activity; this is somewhat controversial. Makes several contacts with the 16S rRNA in the 70S ribosome. This chain is Large ribosomal subunit protein uL2, found in Staphylothermus marinus (strain ATCC 43588 / DSM 3639 / JCM 9404 / F1).